Reading from the N-terminus, the 350-residue chain is Phospho-2-dehydro-3-deoxyheptonate aldolase, Phe-sensitive (350 aa).

Lys-244 bears the N6-acetyllysine mark.

This sequence belongs to the class-I DAHP synthase family. Homotetramer.

It catalyses the reaction D-erythrose 4-phosphate + phosphoenolpyruvate + H2O = 7-phospho-2-dehydro-3-deoxy-D-arabino-heptonate + phosphate. Its pathway is metabolic intermediate biosynthesis; chorismate biosynthesis; chorismate from D-erythrose 4-phosphate and phosphoenolpyruvate: step 1/7. Stereospecific condensation of phosphoenolpyruvate (PEP) and D-erythrose-4-phosphate (E4P) giving rise to 3-deoxy-D-arabino-heptulosonate-7-phosphate (DAHP). This Escherichia coli O157:H7 protein is Phospho-2-dehydro-3-deoxyheptonate aldolase, Phe-sensitive (aroG).